An 886-amino-acid chain; its full sequence is MEGRSDFVATSQSGSEMSHSETRNRTGMNARKRKFACVECRQQKSKCDAHERAPEPCTKCAKKNVPCILKRDFRRTYKRARNEAIEKRFKELTRTLTNLTSDEILKKIEEEQEIVLDNSNFTKEKVKQLRKSAFETTEIEPRSYKTLRGEPISYSTNRRHTDSSPLTLLSSSTNFDPVHSTNVMTDDQLKCLPKSLGDVYLSSSDIAELFQEFATKYHQFLPVVDLSKGAERIYHLSPCLFWVILLIGLRRKFGATDLMTRLSVLVKSVLSEITISPIIRYTPSDKDEPVLNVASVYSVQAFLLYTFWPPLTSSLSADTSWNTIGTAMFQALRVGLNCAGFSKEYASANSELVNEQIRTWICCNVVSQTVASSFGFPAYVSFDYLVISSIRVPNSKSQVDIPNELRQMAQIARFENQIVNTMNSTPASVTGMVSQEEKQPLLHVLNQQLSQLEISLEENNLDDIRKFLLLVAKVHLLTYYFTDVTSQSAGKSNGNIYEGSYSIMELDTSFETKRGLVKVYNAAVNFLIHANSMWEHDPTIIKYFPGLFVLNIWQSACIISKLIHSSLHSMLDVNSGKKAYNNAISLTFNASVLKYDMAYRSSGIMRSIWSLFANMYDAWKNDQKEGGGRLNNDFNLGITIKSRMSVNVFFDCLYILKEKCGMAKLERETKVSTAYNVDEEEEEDEDEEGEEEEEEEELSSKVPENMDSQQLRTRKFTNVRHPEKKARKIIETIPLDPNPINAGSTSSGSSLTTPNSQVANTISYRGILNKMSPREQLNHANLDSSVSTDIKDTEAVNEPLPIGRNAEHPANQPPLSITQMQENTLPATQANSSLLETYPIVQSNPVTTTIKESPNSIMAGWDNWESDMVWRDVDILMNEFAFNPKV.

The disordered stretch occupies residues 1 to 28 (MEGRSDFVATSQSGSEMSHSETRNRTGM). Polar residues predominate over residues 8-17 (VATSQSGSEM). Positions 37 to 67 (CVECRQQKSKCDAHERAPEPCTKCAKKNVPC) form a DNA-binding region, zn(2)-C6 fungal-type. Disordered regions lie at residues 673 to 709 (TAYNVDEEEEEDEDEEGEEEEEEEELSSKVPENMDSQ) and 734 to 756 (PLDPNPINAGSTSSGSSLTTPNS). Positions 677–697 (VDEEEEEDEDEEGEEEEEEEE) are enriched in acidic residues. Residues 743–753 (GSTSSGSSLTT) are compositionally biased toward low complexity. A 9aaTAD motif is present at residues 874 to 882 (DILMNEFAF).

It is found in the nucleus. Factor for control of RNA levels of a group of leucine-specific genes. The polypeptide is Regulatory protein LEU3 (LEU3) (Saccharomyces cerevisiae (strain ATCC 204508 / S288c) (Baker's yeast)).